The following is a 68-amino-acid chain: Conotoxin Cal14.13b (68 aa).

An N-terminal signal peptide occupies residues 1-20; the sequence is MKLCVVIVLLMLAMPFNGGE. Residues 21-68 constitute a propeptide that is removed on maturation; the sequence is ASRFFNQHARSQRSGMKTRGIWCDPPCPEGETCRGGECSDEFNGDMGR. Methionine 66 carries the post-translational modification Methionine amide.

Contains 2 disulfide bonds. In terms of tissue distribution, expressed by the venom duct.

The protein localises to the secreted. Probable neurotoxin with unknown target. Possibly targets ion channels. In Californiconus californicus (California cone), this protein is Conotoxin Cal14.13b.